A 351-amino-acid polypeptide reads, in one-letter code: Protein Wnt-8b (351 aa).

A signal peptide spans 1–22 (MFLSKPSVYICLFTCVLQLSHS). A disulfide bridge connects residues cysteine 54 and cysteine 65. N-linked (GlcNAc...) asparagine glycosylation is present at asparagine 103. Disulfide bonds link cysteine 104-cysteine 112, cysteine 114-cysteine 132, cysteine 180-cysteine 194, cysteine 182-cysteine 189, cysteine 256-cysteine 294, cysteine 272-cysteine 287, cysteine 291-cysteine 333, cysteine 309-cysteine 324, cysteine 311-cysteine 321, and cysteine 316-cysteine 317. Serine 186 carries O-palmitoleoyl serine lipidation. Asparagine 259 carries N-linked (GlcNAc...) asparagine glycosylation.

The protein belongs to the Wnt family. In terms of processing, palmitoleoylation is required for efficient binding to frizzled receptors. Depalmitoleoylation leads to Wnt signaling pathway inhibition. Post-translationally, proteolytic processing by TIKI1 and TIKI2 promotes oxidation and formation of large disulfide-bond oligomers, leading to inactivation of WNT8B. Expression is restricted to the brain, and more specifically to the forebrain.

It localises to the secreted. It is found in the extracellular space. The protein localises to the extracellular matrix. Functionally, ligand for members of the frizzled family of seven transmembrane receptors. May play an important role in the development and differentiation of certain forebrain structures, notably the hippocampus. This chain is Protein Wnt-8b (WNT8B), found in Homo sapiens (Human).